The chain runs to 804 residues: Lon protease 2 (804 aa).

The 198-residue stretch at 19–216 (VPILPLRNSV…LVLAMVGRQL (198 aa)) folds into the Lon N-terminal domain. 367–374 (GPPGVGKT) lines the ATP pocket. Residues 603–784 (TLQPGVATGL…EEILPLVLEP (182 aa)) form the Lon proteolytic domain. Catalysis depends on residues serine 690 and lysine 733. The interval 782–804 (LEPPRRAPAQSASPEELEEQAGV) is disordered.

It belongs to the peptidase S16 family. As to quaternary structure, homohexamer. Organized in a ring with a central cavity.

It localises to the cytoplasm. It catalyses the reaction Hydrolysis of proteins in presence of ATP.. ATP-dependent serine protease that mediates the selective degradation of mutant and abnormal proteins as well as certain short-lived regulatory proteins. Required for cellular homeostasis and for survival from DNA damage and developmental changes induced by stress. Degrades polypeptides processively to yield small peptide fragments that are 5 to 10 amino acids long. Binds to DNA in a double-stranded, site-specific manner. The chain is Lon protease 2 from Sorangium cellulosum (strain So ce56) (Polyangium cellulosum (strain So ce56)).